We begin with the raw amino-acid sequence, 445 residues long: Tubby-like F-box protein 8 (445 aa).

The region spanning 56 to 102 is the F-box domain; the sequence is ESRWASLPPELLRDVIRRLEASESTWPSRKDVVSCAAVCKAWREMCK.

Belongs to the TUB family. Ubiquitous.

In Oryza sativa subsp. japonica (Rice), this protein is Tubby-like F-box protein 8 (TULP8).